A 1180-amino-acid chain; its full sequence is IQ domain-containing protein N (1180 aa).

Residues 34-78 (HPPAPAHPSLLDKMEKAPPQPQHEGLKSKEHLPQQPAEGKTASRR) form a disordered region. The IQ 1 domain maps to 103–132 (HARAATLIQANWRGYWLRQKLISQMMAAKA). Disordered regions lie at residues 283–324 (RVSA…ETPK), 476–496 (MSKTSSQRSPVGVTKPSPQTR), and 786–820 (QRLGGLSAPPWAKPEDRQTQPQPHGHVPGKTTQGG). 5 consecutive IQ domains span residues 926–955 (RILAVITIQAGVRGYLARRRIRLWHRGAMV), 956–978 (IQATWRGYRVRRNLAHLCRATTT), 979–1001 (IQSAWRGYSTRRDQARHWQMLHP), 1113–1142 (QDKAATAIQSAWRGFKIRQQMRQQQMAAKI), and 1143–1165 (VQATWRGHHTRSCLKNTEALLGP).

Interacts with calmodulin.

Its function is as follows. Essential for spermiogenesis and fertilization. May be required for manchette assembly in elongating spermatids. This Homo sapiens (Human) protein is IQ domain-containing protein N.